A 146-amino-acid polypeptide reads, in one-letter code: Hemoglobin cathodic subunit beta (146 aa).

A Globin domain is found at 2–146 (QWSSSERSVI…VVSGLSKQYF (145 aa)). His-63 serves as a coordination point for heme b.

Heterotetramer of two alpha and two beta chains. In terms of tissue distribution, red blood cells.

Its function is as follows. Involved in oxygen transport from the gills to various peripheral tissues. The polypeptide is Hemoglobin cathodic subunit beta (Ophisurus serpens (Serpent eel)).